The chain runs to 164 residues: ATP synthase subunit b (164 aa).

Residues 8-28 (IGLFFWQTIVFLILLFLMAKF) form a helical membrane-spanning segment.

The protein belongs to the ATPase B chain family. As to quaternary structure, F-type ATPases have 2 components, F(1) - the catalytic core - and F(0) - the membrane proton channel. F(1) has five subunits: alpha(3), beta(3), gamma(1), delta(1), epsilon(1). F(0) has three main subunits: a(1), b(2) and c(10-14). The alpha and beta chains form an alternating ring which encloses part of the gamma chain. F(1) is attached to F(0) by a central stalk formed by the gamma and epsilon chains, while a peripheral stalk is formed by the delta and b chains.

The protein localises to the cell membrane. Its function is as follows. F(1)F(0) ATP synthase produces ATP from ADP in the presence of a proton or sodium gradient. F-type ATPases consist of two structural domains, F(1) containing the extramembraneous catalytic core and F(0) containing the membrane proton channel, linked together by a central stalk and a peripheral stalk. During catalysis, ATP synthesis in the catalytic domain of F(1) is coupled via a rotary mechanism of the central stalk subunits to proton translocation. Functionally, component of the F(0) channel, it forms part of the peripheral stalk, linking F(1) to F(0). This Christiangramia forsetii (strain DSM 17595 / CGMCC 1.15422 / KT0803) (Gramella forsetii) protein is ATP synthase subunit b.